The sequence spans 553 residues: Hydroxylamine reductase (553 aa).

Residues C3, C6, C15, and C21 each contribute to the [4Fe-4S] cluster site. The hybrid [4Fe-2O-2S] cluster site is built by H244, E268, C312, C406, C434, C459, E494, and K496. C406 is modified (cysteine persulfide).

It belongs to the HCP family. Monomer. The cofactor is [4Fe-4S] cluster. Hybrid [4Fe-2O-2S] cluster serves as cofactor.

The protein resides in the cytoplasm. It catalyses the reaction A + NH4(+) + H2O = hydroxylamine + AH2 + H(+). Functionally, catalyzes the reduction of hydroxylamine to form NH(3) and H(2)O. This is Hydroxylamine reductase from Nitratidesulfovibrio vulgaris (strain ATCC 29579 / DSM 644 / CCUG 34227 / NCIMB 8303 / VKM B-1760 / Hildenborough) (Desulfovibrio vulgaris).